The primary structure comprises 128 residues: Histone H2A type 1-H (128 aa).

A disordered region spans residues Met-1–Ala-22. An N-acetylserine modification is found at Ser-2. Ser-2 is subject to Phosphoserine; by RPS6KA5. Arg-4 bears the Citrulline; alternate mark. Residue Arg-4 is modified to Symmetric dimethylarginine; by PRMT5; alternate. Lys-6 is subject to N6-(2-hydroxyisobutyryl)lysine. Over residues Gln-7 to Ser-19 the composition is skewed to basic residues. Lys-10 is modified (N6-(2-hydroxyisobutyryl)lysine; alternate). An N6-(beta-hydroxybutyryl)lysine; alternate mark is found at Lys-10 and Lys-14. Position 10 is an N6-lactoyllysine; alternate (Lys-10). The residue at position 10 (Lys-10) is an N6-succinyllysine; alternate. Lys-14 is covalently cross-linked (Glycyl lysine isopeptide (Lys-Gly) (interchain with G-Cter in ubiquitin); alternate). A Glycyl lysine isopeptide (Lys-Gly) (interchain with G-Cter in ubiquitin) cross-link involves residue Lys-16. The residue at position 37 (Lys-37) is an N6-(2-hydroxyisobutyryl)lysine; alternate. An N6-(beta-hydroxybutyryl)lysine; alternate modification is found at Lys-37. Residue Lys-37 is modified to N6-crotonyllysine; alternate. 2 positions are modified to N6-(2-hydroxyisobutyryl)lysine: Lys-75 and Lys-76. The residue at position 96 (Lys-96) is an N6-(2-hydroxyisobutyryl)lysine; alternate. Lys-96 carries the N6-(beta-hydroxybutyryl)lysine; alternate modification. The residue at position 96 (Lys-96) is an N6-succinyllysine; alternate. Lys-96 is modified (N6-glutaryllysine; alternate). Lys-100 is modified (N6-glutaryllysine). At Gln-105 the chain carries N5-methylglutamine. N6-(2-hydroxyisobutyryl)lysine; alternate is present on Lys-119. At Lys-119 the chain carries N6-(beta-hydroxybutyryl)lysine; alternate. 2 positions are modified to N6-crotonyllysine; alternate: Lys-119 and Lys-120. N6-glutaryllysine; alternate occurs at positions 119 and 120. Lys-120 participates in a covalent cross-link: Glycyl lysine isopeptide (Lys-Gly) (interchain with G-Cter in ubiquitin); alternate. Thr-121 carries the phosphothreonine; by DCAF1 modification. N6-crotonyllysine; alternate is present on Lys-126. Lys-126 carries the post-translational modification N6-glutaryllysine; alternate.

The protein belongs to the histone H2A family. The nucleosome is a histone octamer containing two molecules each of H2A, H2B, H3 and H4 assembled in one H3-H4 heterotetramer and two H2A-H2B heterodimers. The octamer wraps approximately 147 bp of DNA. In terms of processing, deiminated on Arg-4 in granulocytes upon calcium entry. Monoubiquitination of Lys-120 (H2AK119Ub) by RING1, TRIM37 and RNF2/RING2 complex gives a specific tag for epigenetic transcriptional repression and participates in X chromosome inactivation of female mammals. It is involved in the initiation of both imprinted and random X inactivation. Ubiquitinated H2A is enriched in inactive X chromosome chromatin. Ubiquitination of H2A functions downstream of methylation of 'Lys-27' of histone H3 (H3K27me). H2AK119Ub by RNF2/RING2 can also be induced by ultraviolet and may be involved in DNA repair. Monoubiquitination of Lys-120 (H2AK119Ub) by TRIM37 may promote transformation of cells in a number of breast cancers. Following DNA double-strand breaks (DSBs), it is ubiquitinated through 'Lys-63' linkage of ubiquitin moieties by the E2 ligase UBE2N and the E3 ligases RNF8 and RNF168, leading to the recruitment of repair proteins to sites of DNA damage. Ubiquitination at Lys-14 and Lys-16 (H2AK13Ub and H2AK15Ub, respectively) in response to DNA damage is initiated by RNF168 that mediates monoubiquitination at these 2 sites, and 'Lys-63'-linked ubiquitin are then conjugated to monoubiquitin; RNF8 is able to extend 'Lys-63'-linked ubiquitin chains in vitro. Deubiquitinated by USP51 at Lys-14 and Lys-16 (H2AK13Ub and H2AK15Ub, respectively) after damaged DNA is repaired. H2AK119Ub and ionizing radiation-induced 'Lys-63'-linked ubiquitination (H2AK13Ub and H2AK15Ub) are distinct events. Post-translationally, phosphorylation on Ser-2 (H2AS1ph) is enhanced during mitosis. Phosphorylation on Ser-2 by RPS6KA5/MSK1 directly represses transcription. Acetylation of H3 inhibits Ser-2 phosphorylation by RPS6KA5/MSK1. Phosphorylation at Thr-121 (H2AT120ph) by DCAF1 is present in the regulatory region of many tumor suppresor genes and down-regulates their transcription. In terms of processing, glutamine methylation at Gln-105 (H2AQ104me) by FBL is specifically dedicated to polymerase I. It is present at 35S ribosomal DNA locus and impairs binding of the FACT complex. Symmetric dimethylation on Arg-4 by the PRDM1/PRMT5 complex may play a crucial role in the germ-cell lineage. Post-translationally, crotonylation (Kcr) is specifically present in male germ cells and marks testis-specific genes in post-meiotic cells, including X-linked genes that escape sex chromosome inactivation in haploid cells. Crotonylation marks active promoters and enhancers and confers resistance to transcriptional repressors. It is also associated with post-meiotically activated genes on autosomes. In terms of processing, lactylated in macrophages by EP300/P300 by using lactoyl-CoA directly derived from endogenous or exogenous lactate, leading to stimulates gene transcription.

It is found in the nucleus. It localises to the chromosome. In terms of biological role, core component of nucleosome. Nucleosomes wrap and compact DNA into chromatin, limiting DNA accessibility to the cellular machineries which require DNA as a template. Histones thereby play a central role in transcription regulation, DNA repair, DNA replication and chromosomal stability. DNA accessibility is regulated via a complex set of post-translational modifications of histones, also called histone code, and nucleosome remodeling. This Homo sapiens (Human) protein is Histone H2A type 1-H.